The primary structure comprises 91 residues: Cell division topological specificity factor (91 aa).

The protein belongs to the MinE family.

In terms of biological role, prevents the cell division inhibition by proteins MinC and MinD at internal division sites while permitting inhibition at polar sites. This ensures cell division at the proper site by restricting the formation of a division septum at the midpoint of the long axis of the cell. This Chloroflexus aurantiacus (strain ATCC 29366 / DSM 635 / J-10-fl) protein is Cell division topological specificity factor.